Consider the following 417-residue polypeptide: Serine hydroxymethyltransferase (417 aa).

Residues leucine 121 and 125 to 127 (GHL) contribute to the (6S)-5,6,7,8-tetrahydrofolate site. N6-(pyridoxal phosphate)lysine is present on lysine 229. Residue 355–357 (SPF) coordinates (6S)-5,6,7,8-tetrahydrofolate.

It belongs to the SHMT family. In terms of assembly, homodimer. Pyridoxal 5'-phosphate is required as a cofactor.

The protein localises to the cytoplasm. The enzyme catalyses (6R)-5,10-methylene-5,6,7,8-tetrahydrofolate + glycine + H2O = (6S)-5,6,7,8-tetrahydrofolate + L-serine. The protein operates within one-carbon metabolism; tetrahydrofolate interconversion. Its pathway is amino-acid biosynthesis; glycine biosynthesis; glycine from L-serine: step 1/1. Its function is as follows. Catalyzes the reversible interconversion of serine and glycine with tetrahydrofolate (THF) serving as the one-carbon carrier. This reaction serves as the major source of one-carbon groups required for the biosynthesis of purines, thymidylate, methionine, and other important biomolecules. Also exhibits THF-independent aldolase activity toward beta-hydroxyamino acids, producing glycine and aldehydes, via a retro-aldol mechanism. This chain is Serine hydroxymethyltransferase, found in Klebsiella pneumoniae (strain 342).